The following is a 229-amino-acid chain: Protein fmp52-2, mitochondrial (229 aa).

A mitochondrion-targeting transit peptide spans 1 to 45 (MTTAAVFGSTGAVGGQILATLLASDAFSSVKTVSRRLPNAQSPKL).

Belongs to the FMP52 family.

The protein resides in the mitochondrion outer membrane. This is Protein fmp52-2, mitochondrial (fmp522) from Aspergillus oryzae (strain ATCC 42149 / RIB 40) (Yellow koji mold).